Consider the following 174-residue polypeptide: Shikimate kinase (174 aa).

ATP is bound at residue 15 to 20 (GTGKST). Ser-19 is a Mg(2+) binding site. The substrate site is built by Asp-37, Arg-61, and Gly-82. Residue Arg-120 coordinates ATP. Arg-138 is a binding site for substrate.

The protein belongs to the shikimate kinase family. Monomer. Mg(2+) serves as cofactor.

It is found in the cytoplasm. The catalysed reaction is shikimate + ATP = 3-phosphoshikimate + ADP + H(+). It functions in the pathway metabolic intermediate biosynthesis; chorismate biosynthesis; chorismate from D-erythrose 4-phosphate and phosphoenolpyruvate: step 5/7. Functionally, catalyzes the specific phosphorylation of the 3-hydroxyl group of shikimic acid using ATP as a cosubstrate. The polypeptide is Shikimate kinase (Staphylococcus aureus (strain MSSA476)).